A 354-amino-acid chain; its full sequence is Thiamine thiazole synthase (354 aa).

Substrate contacts are provided by residues Ala-83, 104–105 (EA), Gly-112, and Val-177. At Cys-210 the chain carries 2,3-didehydroalanine (Cys). Substrate is bound by residues Asp-212, His-227, Met-305, and 315–317 (RMR).

Belongs to the THI4 family. Homooctamer. The cofactor is Fe cation. During the catalytic reaction, a sulfide is transferred from Cys-210 to a reaction intermediate, generating a dehydroalanine residue.

The protein localises to the cytoplasm. The protein resides in the nucleus. The enzyme catalyses [ADP-thiazole synthase]-L-cysteine + glycine + NAD(+) = [ADP-thiazole synthase]-dehydroalanine + ADP-5-ethyl-4-methylthiazole-2-carboxylate + nicotinamide + 3 H2O + 2 H(+). Its function is as follows. Involved in biosynthesis of the thiamine precursor thiazole. Catalyzes the conversion of NAD and glycine to adenosine diphosphate 5-(2-hydroxyethyl)-4-methylthiazole-2-carboxylic acid (ADT), an adenylated thiazole intermediate. The reaction includes an iron-dependent sulfide transfer from a conserved cysteine residue of the protein to a thiazole intermediate. The enzyme can only undergo a single turnover, which suggests it is a suicide enzyme. May have additional roles in adaptation to various stress conditions and in DNA damage tolerance. In Candida albicans (strain WO-1) (Yeast), this protein is Thiamine thiazole synthase.